A 569-amino-acid polypeptide reads, in one-letter code: Proline--tRNA ligase (569 aa).

It belongs to the class-II aminoacyl-tRNA synthetase family. ProS type 1 subfamily. Homodimer.

It is found in the cytoplasm. The enzyme catalyses tRNA(Pro) + L-proline + ATP = L-prolyl-tRNA(Pro) + AMP + diphosphate. In terms of biological role, catalyzes the attachment of proline to tRNA(Pro) in a two-step reaction: proline is first activated by ATP to form Pro-AMP and then transferred to the acceptor end of tRNA(Pro). As ProRS can inadvertently accommodate and process non-cognate amino acids such as alanine and cysteine, to avoid such errors it has two additional distinct editing activities against alanine. One activity is designated as 'pretransfer' editing and involves the tRNA(Pro)-independent hydrolysis of activated Ala-AMP. The other activity is designated 'posttransfer' editing and involves deacylation of mischarged Ala-tRNA(Pro). The misacylated Cys-tRNA(Pro) is not edited by ProRS. In Lactiplantibacillus plantarum (strain ATCC BAA-793 / NCIMB 8826 / WCFS1) (Lactobacillus plantarum), this protein is Proline--tRNA ligase.